The chain runs to 101 residues: Small ribosomal subunit protein uS14 (101 aa).

This sequence belongs to the universal ribosomal protein uS14 family. Part of the 30S ribosomal subunit. Contacts proteins S3 and S10.

In terms of biological role, binds 16S rRNA, required for the assembly of 30S particles and may also be responsible for determining the conformation of the 16S rRNA at the A site. The chain is Small ribosomal subunit protein uS14 from Cronobacter sakazakii (strain ATCC BAA-894) (Enterobacter sakazakii).